A 142-amino-acid chain; its full sequence is Hemoglobin subunit zeta (142 aa).

The residue at position 2 (S2) is an N-acetylserine. The region spanning 2 to 142 (SLMKNERAII…LSSILTEKYR (141 aa)) is the Globin domain. Phosphothreonine is present on T29. S53 is subject to Phosphoserine. Position 59 (H59) interacts with heme b. At S73 the chain carries Phosphoserine. Position 88 (H88) interacts with heme b.

This sequence belongs to the globin family. Heterotetramer of two zeta chains and beta-type chains.

Its function is as follows. The zeta chain is an alpha-type chain of mammalian embryonic hemoglobin. In Mus musculus (Mouse), this protein is Hemoglobin subunit zeta (Hbz).